The primary structure comprises 211 residues: Arginine exporter protein ArgO (211 aa).

The Cytoplasmic portion of the chain corresponds to M1 to M38. A helical transmembrane segment spans residues I39 to G58. Topologically, residues S59 to M63 are periplasmic. A helical membrane pass occupies residues Q64–A91. Residues M92–E102 are Cytoplasmic-facing. The helical transmembrane segment at V103–F130 threads the bilayer. Residues V131–L140 lie on the Periplasmic side of the membrane. Residues D141–L170 traverse the membrane as a helical segment. Over A171 to R173 the chain is Cytoplasmic. A helical membrane pass occupies residues L174–R200. Topologically, residues D201 to S211 are periplasmic.

This sequence belongs to the LysE/ArgO transporter (TC 2.A.75) family. In terms of assembly, monomer.

The protein resides in the cell inner membrane. The enzyme catalyses L-arginine(in) = L-arginine(out). Its function is as follows. Involved in the export of arginine. Important to control the intracellular level of arginine and the correct balance between arginine and lysine. May also be involved in the export of canavanine (a plant-derived antimetabolite). This is Arginine exporter protein ArgO from Escherichia coli (strain K12).